Here is a 100-residue protein sequence, read N- to C-terminus: MGFNNLVSLAVLIEKVFPIRYTPAGIPVLDIILKHESWQEENGQQCLVQLEIPARILGRQAEEWQYRQGVYVHVEGFLAQKSRRSLMPMLRIQNIQEYKG.

Residues M1–K99 form the SSB domain.

The protein belongs to the PriB family. As to quaternary structure, homodimer. Interacts with PriA and DnaT. Component of the replication restart primosome. Primosome assembly occurs via a 'hand-off' mechanism. PriA binds to replication forks, subsequently PriB then DnaT bind; DnaT then displaces ssDNA to generate the helicase loading substrate.

Functionally, involved in the restart of stalled replication forks, which reloads the replicative helicase on sites other than the origin of replication; the PriA-PriB pathway is the major replication restart pathway. During primosome assembly it facilitates complex formation between PriA and DnaT on DNA; stabilizes PriA on DNA. Stimulates the DNA unwinding activity of PriA helicase. The polypeptide is Replication restart protein PriB (Neisseria meningitidis serogroup A / serotype 4A (strain DSM 15465 / Z2491)).